A 431-amino-acid chain; its full sequence is Enolase (431 aa).

Glutamine 167 is a (2R)-2-phosphoglycerate binding site. Glutamate 209 serves as the catalytic Proton donor. Residues aspartate 246, glutamate 289, and aspartate 316 each contribute to the Mg(2+) site. Lysine 341, arginine 370, serine 371, and lysine 392 together coordinate (2R)-2-phosphoglycerate. Lysine 341 acts as the Proton acceptor in catalysis.

It belongs to the enolase family. Component of the RNA degradosome, a multiprotein complex involved in RNA processing and mRNA degradation. Mg(2+) serves as cofactor.

It is found in the cytoplasm. The protein resides in the secreted. Its subcellular location is the cell surface. It catalyses the reaction (2R)-2-phosphoglycerate = phosphoenolpyruvate + H2O. It functions in the pathway carbohydrate degradation; glycolysis; pyruvate from D-glyceraldehyde 3-phosphate: step 4/5. Its function is as follows. Catalyzes the reversible conversion of 2-phosphoglycerate (2-PG) into phosphoenolpyruvate (PEP). It is essential for the degradation of carbohydrates via glycolysis. The protein is Enolase of Shewanella woodyi (strain ATCC 51908 / MS32).